Consider the following 380-residue polypeptide: Cytochrome b (380 aa).

The next 4 helical transmembrane spans lie at Phe-33–Met-53, Trp-77–Val-98, Trp-113–Leu-133, and Phe-178–Leu-198. His-83 and His-97 together coordinate heme b. Positions 182 and 196 each coordinate heme b. Position 201 (His-201) interacts with a ubiquinone. Helical transmembrane passes span Tyr-226 to Ser-246, Leu-288 to His-308, Pro-320 to Gly-340, and Phe-347 to Pro-367.

The protein belongs to the cytochrome b family. In terms of assembly, the cytochrome bc1 complex contains 3 respiratory subunits (MT-CYB, CYC1 and UQCRFS1), 2 core proteins (UQCRC1 and UQCRC2) and probably 6 low-molecular weight proteins. The cofactor is heme b.

It is found in the mitochondrion inner membrane. Functionally, component of the ubiquinol-cytochrome c reductase complex (complex III or cytochrome b-c1 complex) that is part of the mitochondrial respiratory chain. The b-c1 complex mediates electron transfer from ubiquinol to cytochrome c. Contributes to the generation of a proton gradient across the mitochondrial membrane that is then used for ATP synthesis. The polypeptide is Cytochrome b (mt-cyb) (Acipenser sinensis (Chinese sturgeon)).